A 601-amino-acid chain; its full sequence is Elongation factor 4 (601 aa).

Residues 7–189 form the tr-type G domain; it reads DTIRNFSIVA…AIVAKLPPPK (183 aa). Residues 19 to 24 and 136 to 139 contribute to the GTP site; these read DHGKST and NKID.

The protein belongs to the TRAFAC class translation factor GTPase superfamily. Classic translation factor GTPase family. LepA subfamily.

The protein localises to the cell inner membrane. It carries out the reaction GTP + H2O = GDP + phosphate + H(+). Functionally, required for accurate and efficient protein synthesis under certain stress conditions. May act as a fidelity factor of the translation reaction, by catalyzing a one-codon backward translocation of tRNAs on improperly translocated ribosomes. Back-translocation proceeds from a post-translocation (POST) complex to a pre-translocation (PRE) complex, thus giving elongation factor G a second chance to translocate the tRNAs correctly. Binds to ribosomes in a GTP-dependent manner. The chain is Elongation factor 4 from Methylobacterium sp. (strain 4-46).